Here is a 378-residue protein sequence, read N- to C-terminus: Sterol 24-C-methyltransferase erg6 (378 aa).

Belongs to the class I-like SAM-binding methyltransferase superfamily. Erg6/SMT family.

It is found in the nucleus. Its subcellular location is the endoplasmic reticulum. The catalysed reaction is zymosterol + S-adenosyl-L-methionine = fecosterol + S-adenosyl-L-homocysteine + H(+). It catalyses the reaction lanosterol + S-adenosyl-L-methionine = eburicol + S-adenosyl-L-homocysteine + H(+). Its pathway is steroid metabolism; ergosterol biosynthesis. Sterol 24-C-methyltransferase; part of the third module of ergosterol biosynthesis pathway that includes by the late steps of the pathway. Erg6 catalyzes the methyl transfer from S-adenosyl-methionine to the C-24 of zymosterol to form fecosterol. The third module or late pathway involves the ergosterol synthesis itself through consecutive reactions that mainly occur in the endoplasmic reticulum (ER) membrane. Firstly, the squalene synthase erg9 catalyzes the condensation of 2 farnesyl pyrophosphate moieties to form squalene, which is the precursor of all steroids. Secondly, squalene is converted into lanosterol by the consecutive action of the squalene epoxidase erg1 and the lanosterol synthase erg7. The lanosterol 14-alpha-demethylase erg11/cyp1 catalyzes C14-demethylation of lanosterol to produce 4,4'-dimethyl cholesta-8,14,24-triene-3-beta-ol. In the next steps, a complex process involving various demethylation, reduction and desaturation reactions catalyzed by the C-14 reductase erg24 and the C-4 demethylation complex erg25-erg26-erg27 leads to the production of zymosterol. Erg28 likely functions in the C-4 demethylation complex reaction by tethering erg26 and Erg27 to the endoplasmic reticulum or to facilitate interaction between these proteins. Then, the sterol 24-C-methyltransferase erg6 catalyzes the methyl transfer from S-adenosyl-methionine to the C-24 of zymosterol to form fecosterol. The C-8 sterol isomerase erg2 catalyzes the reaction which results in unsaturation at C-7 in the B ring of sterols and thus converts fecosterol to episterol. The sterol-C5-desaturases erg31 and erg32 then catalyze the introduction of a C-5 double bond in the B ring to produce 5-dehydroepisterol. The C-22 sterol desaturase erg5 further converts 5-dehydroepisterol into ergosta-5,7,22,24(28)-tetraen-3beta-ol by forming the C-22(23) double bond in the sterol side chain. Finally, ergosta-5,7,22,24(28)-tetraen-3beta-ol is substrate of the C-24(28) sterol reductase erg4 to produce ergosterol. In the genus Schizosaccharomyces, a second route exists between lanosterol and fecosterol, via the methylation of lanosterol to eburicol by erg6, followed by C14-demethylation by erg11/cyp1 and C4-demethylation by the demethylation complex erg25-erg26-erg27. The sequence is that of Sterol 24-C-methyltransferase erg6 from Schizosaccharomyces pombe (strain 972 / ATCC 24843) (Fission yeast).